The sequence spans 493 residues: Ribosomal protein uS12 methylthiotransferase RimO (493 aa).

Residues 5 to 121 (RTVALVTLGC…ISDRLQTILN (117 aa)) enclose the MTTase N-terminal domain. [4Fe-4S] cluster is bound by residues cysteine 14, cysteine 50, and cysteine 84. The interval 153-177 (LPGHGPTDLPEGVAPASGPRAPLRR) is disordered. A Radical SAM core domain is found at 179 to 410 (LDGSPVASVK…RLAEELVSQR (232 aa)). [4Fe-4S] cluster contacts are provided by cysteine 193, cysteine 197, and cysteine 200. The TRAM domain maps to 412 to 482 (DERVGATVRV…GVDLVAEPLL (71 aa)).

This sequence belongs to the methylthiotransferase family. RimO subfamily. Requires [4Fe-4S] cluster as cofactor.

The protein resides in the cytoplasm. It catalyses the reaction L-aspartate(89)-[ribosomal protein uS12]-hydrogen + (sulfur carrier)-SH + AH2 + 2 S-adenosyl-L-methionine = 3-methylsulfanyl-L-aspartate(89)-[ribosomal protein uS12]-hydrogen + (sulfur carrier)-H + 5'-deoxyadenosine + L-methionine + A + S-adenosyl-L-homocysteine + 2 H(+). In terms of biological role, catalyzes the methylthiolation of an aspartic acid residue of ribosomal protein uS12. The polypeptide is Ribosomal protein uS12 methylthiotransferase RimO (Streptomyces coelicolor (strain ATCC BAA-471 / A3(2) / M145)).